A 102-amino-acid polypeptide reads, in one-letter code: A-type ATP synthase subunit F (102 aa).

It belongs to the V-ATPase F subunit family. As to quaternary structure, has multiple subunits with at least A(3), B(3), C, D, E, F, H, I and proteolipid K(x).

The protein resides in the cell membrane. Its function is as follows. Component of the A-type ATP synthase that produces ATP from ADP in the presence of a proton gradient across the membrane. The polypeptide is A-type ATP synthase subunit F (Thermococcus gammatolerans (strain DSM 15229 / JCM 11827 / EJ3)).